A 1030-amino-acid chain; its full sequence is Kinesin-related protein 6 (1030 aa).

Residues 3 to 66 (FENDQLYNWL…FHLLQQLKKQ (64 aa)) enclose the SAM domain. Disordered stretches follow at residues 66–164 (QTPP…SDFM) and 178–308 (RQQY…EDDD). Polar residues predominate over residues 68–80 (PPISNTSSPVINS). 4 stretches are compositionally biased toward low complexity: residues 81-117 (NNNN…NNNN), 125-164 (TSTS…SDFM), 181-197 (YAKQ…KYQS), and 225-238 (QQQQ…QQQD). The segment covering 239–290 (FEFEEEEEEEDQQQQYDEEEEEEEEYEEDFYKEDLGEIDDGNVLDISDDEPD) has biased composition (acidic residues). The 323-residue stretch at 453 to 775 (RIRVCVRKRP…LRYADRVKEL (323 aa)) folds into the Kinesin motor domain. Residue 543–550 (GQTGSGKT) participates in ATP binding. Composition is skewed to low complexity over residues 826–839 (INSQ…TSQP), 849–906 (QQQE…QTQP), and 981–1009 (PIQQ…QTPQ). 2 disordered regions span residues 826–915 (INSQ…KIDF) and 981–1030 (PIQQ…SSRN).

This sequence belongs to the TRAFAC class myosin-kinesin ATPase superfamily. Kinesin family.

The protein resides in the cytoplasm. The protein localises to the cytoskeleton. Functionally, microtubule-associated force-producing protein that plays a role in organelle transport. Its motor activity is directed toward the microtubule's plus end. The protein is Kinesin-related protein 6 (kif6) of Dictyostelium discoideum (Social amoeba).